We begin with the raw amino-acid sequence, 206 residues long: LexA repressor (206 aa).

Positions 28–48 form a DNA-binding region, H-T-H motif; it reads VREIGEAVGLASSSTVHGHLA. Residues Ser-128 and Lys-166 each act as for autocatalytic cleavage activity in the active site.

This sequence belongs to the peptidase S24 family. Homodimer.

The enzyme catalyses Hydrolysis of Ala-|-Gly bond in repressor LexA.. Its function is as follows. Represses a number of genes involved in the response to DNA damage (SOS response), including recA and lexA. In the presence of single-stranded DNA, RecA interacts with LexA causing an autocatalytic cleavage which disrupts the DNA-binding part of LexA, leading to derepression of the SOS regulon and eventually DNA repair. The sequence is that of LexA repressor from Bacillus velezensis (strain DSM 23117 / BGSC 10A6 / LMG 26770 / FZB42) (Bacillus amyloliquefaciens subsp. plantarum).